Here is a 539-residue protein sequence, read N- to C-terminus: Putative S-adenosyl-L-methionine-dependent methyltransferase MAP_4079 (539 aa).

S-adenosyl-L-methionine is bound by residues Asp134 and 163–164; that span reads DL. Positions 290–392 are disordered; that stretch reads AGYGRGRRRP…RGEPGERGGQ (103 aa). Over residues 301 to 313 the composition is skewed to polar residues; that stretch reads SATSCRGTCSSPR. Residues 341-351 show a composition bias toward gly residues; it reads HGFGNQCGGPD.

Belongs to the UPF0677 family.

Exhibits S-adenosyl-L-methionine-dependent methyltransferase activity. The sequence is that of Putative S-adenosyl-L-methionine-dependent methyltransferase MAP_4079 from Mycolicibacterium paratuberculosis (strain ATCC BAA-968 / K-10) (Mycobacterium paratuberculosis).